The following is an 813-amino-acid chain: Protein PPP4R3C1 (813 aa).

The segment at 730 to 813 (NESESAIEGQ…PPPKRPNLST (84 aa)) is disordered. The segment covering 777–788 (YDTDDENDDDPY) has biased composition (acidic residues).

Belongs to the SMEK family.

This Mus musculus (Mouse) protein is Protein PPP4R3C1.